A 205-amino-acid polypeptide reads, in one-letter code: Small ribosomal subunit protein uS4 (205 aa).

Residues 94–157 (SRLDTVVYRM…KQIALIQESI (64 aa)) form the S4 RNA-binding domain.

This sequence belongs to the universal ribosomal protein uS4 family. In terms of assembly, part of the 30S ribosomal subunit. Contacts protein S5. The interaction surface between S4 and S5 is involved in control of translational fidelity.

One of the primary rRNA binding proteins, it binds directly to 16S rRNA where it nucleates assembly of the body of the 30S subunit. In terms of biological role, with S5 and S12 plays an important role in translational accuracy. In Rickettsia canadensis (strain McKiel), this protein is Small ribosomal subunit protein uS4.